We begin with the raw amino-acid sequence, 150 residues long: Putative HTH-type transcriptional regulator rrf2-like (150 aa).

The HTH rrf2-type domain occupies 1-139 (MITQKMKYAL…DSLTLEDMLA (139 aa)).

The chain is Putative HTH-type transcriptional regulator rrf2-like from Rhodobacter capsulatus (strain ATCC BAA-309 / NBRC 16581 / SB1003).